The following is a 602-amino-acid chain: Arginine--tRNA ligase (602 aa).

The short motif at A138–H148 is the 'HIGH' region element.

The protein belongs to the class-I aminoacyl-tRNA synthetase family. Monomer.

The protein resides in the cytoplasm. It catalyses the reaction tRNA(Arg) + L-arginine + ATP = L-arginyl-tRNA(Arg) + AMP + diphosphate. The sequence is that of Arginine--tRNA ligase from Gluconobacter oxydans (strain 621H) (Gluconobacter suboxydans).